Reading from the N-terminus, the 352-residue chain is tRNA-specific 2-thiouridylase MnmA (352 aa).

ATP is bound by residues 7-14 (GLSGGVDS) and leucine 33. Cysteine 94 (nucleophile) is an active-site residue. A disulfide bridge connects residues cysteine 94 and cysteine 193. An ATP-binding site is contributed by glycine 119. The interaction with tRNA stretch occupies residues 143-145 (KDQ). Residue cysteine 193 is the Cysteine persulfide intermediate of the active site. An interaction with tRNA region spans residues 298–299 (RY).

The protein belongs to the MnmA/TRMU family.

The protein resides in the cytoplasm. The catalysed reaction is S-sulfanyl-L-cysteinyl-[protein] + uridine(34) in tRNA + AH2 + ATP = 2-thiouridine(34) in tRNA + L-cysteinyl-[protein] + A + AMP + diphosphate + H(+). Its function is as follows. Catalyzes the 2-thiolation of uridine at the wobble position (U34) of tRNA, leading to the formation of s(2)U34. This chain is tRNA-specific 2-thiouridylase MnmA, found in Microcystis aeruginosa (strain NIES-843 / IAM M-2473).